Reading from the N-terminus, the 311-residue chain is Giardin subunit gamma (311 aa).

The stretch at 185-233 (GLQTEINSLEAIIEREFAQAANRLNQEVSNFKESFDASERNIKLQKKHV) forms a coiled coil.

Interacts with EB1.

It localises to the cytoplasm. The protein localises to the cytoskeleton. Its function is as follows. Giardins are involved in parasite attachment to the intestinal mucosa and in the cytoskeletal disassembly and reassembly that marks the transition from infectious trophozoite to transmissible cyst. They may interact with other cytoskeletal proteins such as microtubules in the microribbons or crossbridges, to maintain the integrity of the ventral disk. Involved in formation of the ventral disk. The polypeptide is Giardin subunit gamma (Giardia intestinalis (Giardia lamblia)).